The primary structure comprises 231 residues: 2-C-methyl-D-erythritol 4-phosphate cytidylyltransferase (231 aa).

It belongs to the IspD/TarI cytidylyltransferase family. IspD subfamily.

It carries out the reaction 2-C-methyl-D-erythritol 4-phosphate + CTP + H(+) = 4-CDP-2-C-methyl-D-erythritol + diphosphate. Its pathway is isoprenoid biosynthesis; isopentenyl diphosphate biosynthesis via DXP pathway; isopentenyl diphosphate from 1-deoxy-D-xylulose 5-phosphate: step 2/6. Catalyzes the formation of 4-diphosphocytidyl-2-C-methyl-D-erythritol from CTP and 2-C-methyl-D-erythritol 4-phosphate (MEP). In Xylella fastidiosa (strain M23), this protein is 2-C-methyl-D-erythritol 4-phosphate cytidylyltransferase.